The chain runs to 360 residues: Putative F-box protein At3g47150 (360 aa).

In terms of domain architecture, F-box spans 6 to 56; that stretch reads NTTQIYIPLDLQINILLRLPVKSLLRFRCVSKLWCSIITSHDFRNRHFNIT.

This Arabidopsis thaliana (Mouse-ear cress) protein is Putative F-box protein At3g47150.